A 2571-amino-acid chain; its full sequence is Stabilin-1 (2571 aa).

The first 25 residues, 1-25 (MAEPRTLLLLCVLVLCLSDSSFIRG), serve as a signal peptide directing secretion. At 26–2475 (QTVRSKRCDI…RAVLGSEPPP (2450 aa)) the chain is on the extracellular side. EGF-like domains lie at 111 to 149 (FECP…SVCQ), 157 to 194 (FGPD…PHCD), 196 to 232 (ELPV…NVCL), and 233 to 272 (APDP…KVCL). Disulfide bonds link Cys113–Cys127, Cys121–Cys137, Cys139–Cys148, Cys161–Cys172, Cys165–Cys182, Cys184–Cys193, Cys200–Cys211, Cys205–Cys218, Cys220–Cys231, Cys237–Cys248, Cys242–Cys258, and Cys260–Cys271. N-linked (GlcNAc...) asparagine glycans are attached at residues Asn134 and Asn142. N-linked (GlcNAc...) asparagine glycans are attached at residues Asn287, Asn313, Asn416, Asn607, Asn674, Asn713, and Asn746. FAS1 domains are found at residues 357–495 (YGHL…TALR) and 507–642 (KKTV…EGIL). The 41-residue stretch at 729–769 (DCTQCPGGFSNPCYGKGNCSDGVRGNGACLCFPDYKGIACH) folds into the EGF-like 5 domain. 3 cysteine pairs are disulfide-bonded: Cys733–Cys747, Cys741–Cys757, and Cys759–Cys768. A glycan (N-linked (GlcNAc...) asparagine) is linked at Asn817. 4 EGF-like domains span residues 819–859 (SMGN…NGFS), 862–904 (RSNP…RICV), 905–947 (AIDE…YECS), and 948–987 (PIDP…DGFS). Disulfide bonds link Cys823–Cys838, Cys832–Cys847, Cys866–Cys880, Cys874–Cys890, Cys892–Cys903, Cys909–Cys923, Cys917–Cys933, Cys935–Cys946, Cys952–Cys965, and Cys959–Cys975. FAS1 domains follow at residues 989–1119 (YGDI…SQVL) and 1129–1254 (GPGL…SGIL). N-linked (GlcNAc...) asparagine glycosylation is found at Asn1011, Asn1088, Asn1097, Asn1171, Asn1179, Asn1223, and Asn1275. The Laminin EGF-like 1 domain maps to 1328–1393 (TLCEPCPGGL…CDCDHGLCQE (66 aa)). Cystine bridges form between Cys1333–Cys1347, Cys1341–Cys1357, Cys1359–Cys1368, Cys1380–Cys1391, Cys1384–Cys1401, Cys1403–Cys1412, Cys1421–Cys1431, Cys1425–Cys1441, Cys1443–Cys1454, Cys1460–Cys1473, Cys1467–Cys1483, Cys1485–Cys1496, Cys1502–Cys1515, Cys1509–Cys1525, Cys1527–Cys1539, Cys1545–Cys1558, Cys1552–Cys1568, and Cys1570–Cys1582. N-linked (GlcNAc...) asparagine glycosylation is present at Asn1398. EGF-like domains are found at residues 1417 to 1455 (TDHQ…SYCS), 1456 to 1497 (EVDP…ELCQ), 1498 to 1540 (EINS…QTCK), and 1541 to 1583 (LLDP…ITCH). Asn1450 and Asn1472 each carry an N-linked (GlcNAc...) asparagine glycan. FAS1 domains are found at residues 1583 to 1709 (HGRV…DHVL) and 1725 to 1865 (PQRN…DQLL). Residues Asn1627 and Asn1728 are each glycosylated (N-linked (GlcNAc...) asparagine). The region spanning 1966-2031 (INCHACPGGP…RCTQHGRCDE (66 aa)) is the Laminin EGF-like 2 domain. Intrachain disulfides connect Cys1971-Cys1985, Cys1979-Cys1995, Cys1997-Cys2006, Cys2018-Cys2029, Cys2023-Cys2039, Cys2041-Cys2050, Cys2060-Cys2070, Cys2064-Cys2076, Cys2078-Cys2089, Cys2095-Cys2108, Cys2102-Cys2117, Cys2119-Cys2130, Cys2136-Cys2150, Cys2144-Cys2160, Cys2162-Cys2173, Cys2230-Cys2299, and Cys2254-Cys2275. 3 consecutive EGF-like domains span residues 2056 to 2090 (LQPV…RVCT), 2091 to 2131 (VADL…WSCR), and 2132 to 2174 (ARDP…LQCL). The N-linked (GlcNAc...) asparagine glycan is linked to Asn2107. Residues 2208–2301 (GVFHIQATSG…SELWDAYCYR (94 aa)) form the Link domain. Asn2261, Asn2290, Asn2334, Asn2347, Asn2379, Asn2393, Asn2400, and Asn2424 each carry an N-linked (GlcNAc...) asparagine glycan. Residues 2322-2459 (NGKLLDVLAA…GIIHALASPL (138 aa)) form the FAS1 7 domain. Residues 2476–2496 (VALSLGVVVTSGTLLGLVAGA) traverse the membrane as a helical segment. At 2497 to 2571 (LYLRARGKPP…PDTQRVLKVK (75 aa)) the chain is on the cytoplasmic side.

In terms of assembly, interacts with CHID1.

It is found in the membrane. Functionally, acts as a scavenger receptor for acetylated low density lipoprotein. Binds to both Gram-positive and Gram-negative bacteria and may play a role in defense against bacterial infection. When inhibited in endothelial tube formation assays, there is a marked decrease in cell-cell interactions, suggesting a role in angiogenesis. Involved in the delivery of newly synthesized CHID1/SI-CLP from the biosynthetic compartment to the endosomal/lysosomal system. This Mus musculus (Mouse) protein is Stabilin-1 (Stab1).